The following is a 177-amino-acid chain: Interleukin-19 (177 aa).

The N-terminal stretch at 1 to 24 (MKLQCVSLWLLGTILILCSVDNHG) is a signal peptide. Cystine bridges form between C28–C121, C75–C127, and C76–C129. The N-linked (GlcNAc...) asparagine glycan is linked to N56. N-linked (GlcNAc...) asparagine glycosylation occurs at N135.

Belongs to the IL-10 family.

The protein resides in the secreted. Functionally, cytokine that functions as an anti-inflammatory and proangiogenic factor. Polarizes adaptive immunity to an anti-inflammatory phenotype through induction of T-helper 2 responses by both down-regulation of IFN-gamma and up-regulation of IL4 and IL13. Produced by osteocytes, stimulates granulopoiesis and neutrophil formation. Exerts its biological effect through a receptor complex consisting of a heterodimer of IL20RA and IL20RB. In turn, activates the Janus kinase (JAK) and signal transducer and activator of transcription (STAT) pathway, and importantly, STAT3. The protein is Interleukin-19 (IL19) of Homo sapiens (Human).